An 86-amino-acid polypeptide reads, in one-letter code: MKNLIAELLVKLAQKEEEAKELTVQVEALEIVVTALLRHMEHDAQQALIQDIEQAIDQVTPCPPVNDQDAMLLQQYLKKLLRHPRS.

The stretch at 1 to 38 (MKNLIAELLVKLAQKEEEAKELTVQVEALEIVVTALLR) forms a coiled coil.

It belongs to the IraP family. In terms of assembly, interacts with RssB.

It is found in the cytoplasm. Its function is as follows. Inhibits RpoS proteolysis by regulating RssB activity, thereby increasing the stability of the sigma stress factor RpoS especially during phosphate starvation, but also in stationary phase and during nitrogen starvation. Its effect on RpoS stability is due to its interaction with RssB, which probably blocks the interaction of RssB with RpoS, and the consequent delivery of the RssB-RpoS complex to the ClpXP protein degradation pathway. In Klebsiella pneumoniae (strain 342), this protein is Anti-adapter protein IraP.